The following is a 266-amino-acid chain: Translation initiation factor 2 subunit alpha (266 aa).

Residues 10-81 (GELVVGKIDE…SAQQIDLSIK (72 aa)) enclose the S1 motif domain. The interval 233 to 266 (AEDALEESADRAAKVVEQHGGSGQFHRERSEDDE) is disordered. 2 stretches are compositionally biased toward basic and acidic residues: residues 240–249 (SADRAAKVVE) and 257–266 (FHRERSEDDE).

The protein belongs to the eIF-2-alpha family. In terms of assembly, heterotrimer composed of an alpha, a beta and a gamma chain.

In terms of biological role, eIF-2 functions in the early steps of protein synthesis by forming a ternary complex with GTP and initiator tRNA. This chain is Translation initiation factor 2 subunit alpha, found in Haloarcula marismortui (strain ATCC 43049 / DSM 3752 / JCM 8966 / VKM B-1809) (Halobacterium marismortui).